A 668-amino-acid polypeptide reads, in one-letter code: Hemocyanin subunit D (668 aa).

The signal sequence occupies residues 1-22 (MDTRVLRLTLALVALSGVLADS). The Cu cation site is built by His206, His210, and His236. Asn322 carries N-linked (GlcNAc...) asparagine glycosylation. His357, His361, and His397 together coordinate Cu cation. Cysteines 567 and 614 form a disulfide.

The protein belongs to the tyrosinase family. Hemocyanin subfamily. 36-chain polymer consisting of 6 hexamers, each of which includes 4 different chains, A, B, C and D. Hemolymph.

The protein localises to the secreted. Its subcellular location is the extracellular space. Its function is as follows. Hemocyanins are copper-containing oxygen carriers occurring freely dissolved in the hemolymph of many mollusks and arthropods. This chain is Hemocyanin subunit D (HCD), found in Scutigera coleoptrata (House centipede).